Here is a 113-residue protein sequence, read N- to C-terminus: Hydrogenase maturation factor HypA (113 aa).

H2 contributes to the Ni(2+) binding site. Residues C70, C73, C86, and C88 each contribute to the Zn(2+) site.

It belongs to the HypA/HybF family.

Involved in the maturation of [NiFe] hydrogenases. Required for nickel insertion into the metal center of the hydrogenase. This Nostoc sp. (strain PCC 7120 / SAG 25.82 / UTEX 2576) protein is Hydrogenase maturation factor HypA.